Consider the following 319-residue polypeptide: Fructokinase (319 aa).

Belongs to the carbohydrate kinase PfkB family. Expressed in swelling stolons and, at higher levels, in developing tubers. Low levels found in leaves and stems from tuberizing plants.

The enzyme catalyses D-fructose + ATP = D-fructose 6-phosphate + ADP + H(+). It functions in the pathway glycan biosynthesis; starch biosynthesis. May play an important role in maintaining the flux of carbon towards starch formation. The polypeptide is Fructokinase (Solanum tuberosum (Potato)).